A 626-amino-acid polypeptide reads, in one-letter code: Janus kinase and microtubule-interacting protein 1 (626 aa).

The disordered stretch occupies residues 1 to 25 (MSKKGRSKGDKPEAETDSVQMANEE). The interval 1-365 (MSKKGRSKGD…KLKSLTRENV (365 aa)) is mediates association with microtubules. 2 coiled-coil regions span residues 13–255 (EAET…EAER) and 284–413 (ERDV…DDLS). The mediates interaction with TYK2 and GABBR1 stretch occupies residues 365 to 626 (VEMKEKLSAQ…ILFEPKLKFM (262 aa)). S382 bears the Phosphoserine mark. The span at 452-461 (ETLSETSYNT) shows a compositional bias: polar residues. A disordered region spans residues 452–481 (ETLSETSYNTDRTDRTPATPEEDLDETTTR). Phosphothreonine is present on T470. A coiled-coil region spans residues 490-604 (QLTREYQALQ…EFRVLELEVR (115 aa)).

It belongs to the JAKMIP family. As to quaternary structure, homodimer. Interacts with JAK1 and TYK2. Forms a complex with GABBR1 and KIF5B/kinesin-1. Post-translationally, phosphorylated.

It is found in the cytoplasm. It localises to the cytoskeleton. Its subcellular location is the membrane. In terms of biological role, associates with microtubules and may play a role in the microtubule-dependent transport of the GABA-B receptor. May play a role in JAK1 signaling and regulate microtubule cytoskeleton rearrangements. The polypeptide is Janus kinase and microtubule-interacting protein 1 (Jakmip1) (Mus musculus (Mouse)).